Reading from the N-terminus, the 883-residue chain is Serine/threonine-protein phosphatase BSL1 homolog (883 aa).

Kelch repeat units lie at residues 64 to 113 (ASSG…AVGT), 221 to 271 (MLLL…VFVG), 273 to 323 (RLHV…DHDA), and 341 to 387 (QIYI…NRNH). Disordered stretches follow at residues 381-402 (ENQN…STDK), 430-466 (SHAS…SLEP), and 499-525 (NESR…QRSP). Positions 385-399 (RNHNFNSDSPTTNNS) are enriched in polar residues. Mn(2+) is bound by residues D586, H588, D620, and N652. Catalysis depends on H653, which acts as the Proton donor. Mn(2+)-binding residues include H705 and H784. Residues 861-883 (QRPPTPTRGRPQSASDRNSLAYI) are disordered. The span at 872 to 883 (QSASDRNSLAYI) shows a compositional bias: polar residues.

Belongs to the PPP phosphatase family. BSU subfamily. Interacts with the phosphorylated form of BSK3. Mn(2+) serves as cofactor.

Its subcellular location is the nucleus. The catalysed reaction is O-phospho-L-seryl-[protein] + H2O = L-seryl-[protein] + phosphate. It catalyses the reaction O-phospho-L-threonyl-[protein] + H2O = L-threonyl-[protein] + phosphate. The polypeptide is Serine/threonine-protein phosphatase BSL1 homolog (BSL1) (Oryza sativa subsp. japonica (Rice)).